A 326-amino-acid polypeptide reads, in one-letter code: F-box/LRR-repeat protein 12 (326 aa).

The F-box domain occupies 1-47 (MATFADLPDSVLLEIFSYLPVRDRIRISRVCHHWKKLVDDRWLWRHV). 7 LRR repeats span residues 51 to 78 (LYTM…RMGG), 86 to 111 (APQL…CLHV), 161 to 185 (VPAF…VLGG), 186 to 211 (TYRV…EVLG), 212 to 236 (CTLS…IRLT), 237 to 261 (VRGL…CLLG), and 266 to 291 (PEMP…ELQG).

As to quaternary structure, interacts with SKP1 and CUL1.

The protein operates within protein modification; protein ubiquitination. Its function is as follows. Substrate-recognition component of the SCF (SKP1-CUL1-F-box protein)-type E3 ubiquitin ligase complex. Mediates the polyubiquitination and proteasomal degradation of CAMK1 leading to disruption of cyclin D1/CDK4 complex assembly which results in G1 cell cycle arrest in lung epithelia. The polypeptide is F-box/LRR-repeat protein 12 (FBXL12) (Bos taurus (Bovine)).